The chain runs to 580 residues: MSEITTTDAQAQPEKKDFIRQIIREDLAHGTHTHIHTRFPPEPNGYLHIGHAKAICLDFGVAAEFGGHCTLRMDDTNPSKEDPAFAAAIQEDVSWLGFHWNALRHTSDYFEVLYLAAEKLIADGKAYVCDLNSEQVREYRGTLTEAGRPSPWRERSPDENLELFRQMRAGTFPDGTRTLRAKIDMASGNINLRDPALYRIKHVEHQNTGNTWPIYPMYDFAHALSDAIEGITHSLCTLEFEDHRPLYDWCINHVDLPNNSHLLKPLLDKGFPQEPSQPRQIEFSRLNINYTVMSKRKLTALVDEKLVEGWDDPRMYTLQGLRRRGYTPAAMRLFVERIGISKQNSIIDFSVLENCLRENLDTIAPRRMATIAPMKLVLTNLPEDHEEQLIFPNHPKDDTQGTRTVPFSRELWIERDDFSEVPPKGWKRLVPGGEVRLRGAGIARIDEVVKNAEGHIIALHGWLDPTSRPGMEGAHRKVKGTIHWVSAPHAVAAEIRLYDRLFSIEKPDDNTDGKTYRDFLNPDSKRVVHGYIEPAAAQTAPEHAFQFERLGYFVTDRHDHDATHPVFNRSVTLRDTWQRD.

A 'HIGH' region motif is present at residues 41–51; sequence PEPNGYLHIGH. ATP contacts are provided by residues 42–44 and 48–54; these read EPN and HIGHAKA. Aspartate 74 and tyrosine 218 together coordinate L-glutamine. Residues threonine 237, 285 to 286, and 293 to 295 contribute to the ATP site; these read RL and MSK. Residues 292-296 carry the 'KMSKS' region motif; it reads VMSKR.

Belongs to the class-I aminoacyl-tRNA synthetase family. As to quaternary structure, monomer.

The protein localises to the cytoplasm. It carries out the reaction tRNA(Gln) + L-glutamine + ATP = L-glutaminyl-tRNA(Gln) + AMP + diphosphate. The polypeptide is Glutamine--tRNA ligase (Xylella fastidiosa (strain M12)).